The sequence spans 250 residues: MHVPRSILRAGYFSQVKRTCDDVPMAFCSQAQLKGRSTMIKPRAYALLGVFFLYACASTPREEDVPEKFTPADLMLRAQESYDAGNITWARFYYQTVLDRFPNNESAVISAEFELAHILVKQKSWQDAYNRLMYILKKYEAAGSARLPPAYYKLTLIDLSRVKPHLNLETANTKATEYQKNYQEELKQRQELRQKLLQERTQKMLEALHQEETPEQDARDTAKKKTDQEEHTMRKANAPKTKASGEAPTP.

Positions 165 to 208 form a coiled coil; sequence HLNLETANTKATEYQKNYQEELKQRQELRQKLLQERTQKMLEAL. Residues 201-233 are compositionally biased toward basic and acidic residues; the sequence is TQKMLEALHQEETPEQDARDTAKKKTDQEEHTM. The tract at residues 201–250 is disordered; sequence TQKMLEALHQEETPEQDARDTAKKKTDQEEHTMRKANAPKTKASGEAPTP.

This is an uncharacterized protein from Treponema pallidum (strain Nichols).